The sequence spans 1468 residues: DNA-directed RNA polymerase subunit beta (1468 aa).

The protein belongs to the RNA polymerase beta chain family. The RNAP catalytic core consists of 2 alpha, 1 beta, 1 beta' and 1 omega subunit. When a sigma factor is associated with the core the holoenzyme is formed, which can initiate transcription.

The catalysed reaction is RNA(n) + a ribonucleoside 5'-triphosphate = RNA(n+1) + diphosphate. In terms of biological role, DNA-dependent RNA polymerase catalyzes the transcription of DNA into RNA using the four ribonucleoside triphosphates as substrates. This Aquifex aeolicus (strain VF5) protein is DNA-directed RNA polymerase subunit beta.